A 440-amino-acid polypeptide reads, in one-letter code: 2-phosphinomethylmalate synthase (440 aa).

The Pyruvate carboxyltransferase domain maps to valine 39–asparagine 313.

Belongs to the alpha-IPM synthase/homocitrate synthase family. As to quaternary structure, homodimer. It depends on Mn(2+) as a cofactor. The cofactor is Co(2+).

It catalyses the reaction 3-(hydrohydroxyphosphoryl)pyruvate + acetyl-CoA + H2O = phosphinomethylmalate + CoA + H(+). It functions in the pathway secondary metabolite biosynthesis; bialaphos biosynthesis. With respect to regulation, strongly inhibited by p-chloromercuribenzoate (pCMB), iodoacetamide (IA) and EDTA. Functionally, involved in the biosynthesis of phosphinothricin tripeptide (PTT), also known as bialaphos (BA), a natural-product antibiotic and potent herbicide. Catalyzes the condensation berween phosphinopyruvic acid (PPA), an analog of oxalacetic acid, and acetyl-CoA to form R-2-phosphinomethylmalic acid (PMM). Can also act on oxaloacetate, but shows no activity when acetyl-CoA is substituted by propionyl-CoA or butyryl-CoA. In Streptomyces hygroscopicus, this protein is 2-phosphinomethylmalate synthase.